A 766-amino-acid polypeptide reads, in one-letter code: Serine/threonine-protein kinase tousled-like 1 (766 aa).

The residue at position 1 (M1) is an N-acetylmethionine. Positions 1-19 (MSVQSSSGSLEGPPSWSQL) are enriched in polar residues. The segment at 1 to 197 (MSVQSSSGSL…SPSPTALAFG (197 aa)) is disordered. A compositionally biased stretch (low complexity) spans 20–33 (STSPTPGSAAAARS). A Phosphothreonine modification is found at T38. The segment covering 43–64 (RPREGAMDELHSLDPRRQELLE) has biased composition (basic and acidic residues). S54, S77, and S80 each carry phosphoserine. The segment covering 68-85 (TGVASGSTGSTGSCSVGA) has biased composition (low complexity). Over residues 87-103 (ASTNNESSNHSFGSLGS) the composition is skewed to polar residues. Residues 105–121 (SDKESETPEKKQSESSR) show a composition bias toward basic and acidic residues. A phosphoserine mark is found at S134, S159, S174, and S176. A compositionally biased stretch (low complexity) spans 170–192 (SPQNSHSHSTPSSSVRPNSPSPT). Residues 230 to 281 (QDLEKKEGRIDDLLRANCDLRRQIDEQQKLLEKYKERLNKCISMSKKLLIEK) are a coiled coil. The tract at residues 346–383 (LAKRKPPTANNSQAPSTNSEPKQRKNKAVNGAENDPFV) is disordered. Polar residues predominate over residues 353–365 (TANNSQAPSTNSE). Positions 397–445 (HEQEEIFKLRLGHLKKEEAEIQAELERLERVRNLHIRELKRINNEDNSQ) form a coiled coil. Residues 456 to 734 (YLLLHLLGRG…VHQLANDPYL (279 aa)) enclose the Protein kinase domain. ATP-binding positions include 462–470 (LGRGGFSEV) and K485. The Proton acceptor role is filled by D586. S743 is subject to Phosphoserine.

The protein belongs to the protein kinase superfamily. Ser/Thr protein kinase family. Heterodimer with TLK2. Mg(2+) is required as a cofactor. As to expression, widely expressed. Present in fetal placenta, liver, kidney and pancreas but not heart or skeletal muscle. Also found in adult cell lines. Isoform 3 is ubiquitously expressed in all tissues examined.

The protein resides in the nucleus. The enzyme catalyses L-seryl-[protein] + ATP = O-phospho-L-seryl-[protein] + ADP + H(+). It carries out the reaction L-threonyl-[protein] + ATP = O-phospho-L-threonyl-[protein] + ADP + H(+). Its activity is regulated as follows. Cell-cycle regulated, maximal activity in S-phase. Inactivated by phosphorylation at Ser-743, potentially by CHEK1. In terms of biological role, rapidly and transiently inhibited by phosphorylation following the generation of DNA double-stranded breaks during S-phase. This is cell cycle checkpoint and ATM-pathway dependent and appears to regulate processes involved in chromatin assembly. Isoform 3 phosphorylates and enhances the stability of the t-SNARE SNAP23, augmenting its assembly with syntaxin. Isoform 3 protects the cells from the ionizing radiation by facilitating the repair of DSBs. In vitro, phosphorylates histone H3 at 'Ser-10'. This Homo sapiens (Human) protein is Serine/threonine-protein kinase tousled-like 1 (TLK1).